A 142-amino-acid chain; its full sequence is Transcription antitermination protein NusB (142 aa).

The protein belongs to the NusB family. As to quaternary structure, monomer or homodimer; in equilibrium, with a preference for the monomer. Dimerization may be employed to package NusB in an inactive form until recruitment into antitermination complexes.

In terms of biological role, involved in transcription antitermination. Required for transcription of ribosomal RNA (rRNA) genes. Binds specifically to the boxA antiterminator sequence of the ribosomal RNA (rrn) operons. The chain is Transcription antitermination protein NusB from Thermotoga maritima (strain ATCC 43589 / DSM 3109 / JCM 10099 / NBRC 100826 / MSB8).